Reading from the N-terminus, the 676-residue chain is APGARPAASRERGHKSREERCGERGAAAGRRARGAMLEAMEVPSHSRQLLLQLNTQRTKGFLCDVIIVVQNALFRAHKNILAASSAYLKSLVVHDNLLNLDHEMVSPGIFRLILDFIYTGRLGECEPGGEQSLGAVLAAASYLQIPGLVALCKKKLKRSGKYCHLRGGYAPYKLGRGLRATTPVIQACYSGTPRPVDLQPVEPAAPLNTQCGELYASASQGTPLHPHGLCPPERHCSPPCGLDLSKKSPTGPSAQLLPTDRLLPAEPREPSLPPRHDSPPVSGGLLAGHPAAYKDSPPGGEPGGHPHATDPFRSTPPCAEPPLPRGDGRELMYRWMKHEPLGPYLDEGEAEKELEREEKAESPPAAPQPRYPSVESNDLEPDNSTSEETGSSEGPSPGDALDRYCNHLGYEPESLGDNLYVCIPCGKGFPSSEQLNAHVEAHNEEELYHKAAAEQAVPFLDKGGAGLGDILRPYRCSSCDKSYKDPATLRQHEKTHWLTRPYPCTICGKKFTQRGTMTRHMRSHLGLKPFACDACGMRFTRQYRLTEHMRIHSGEKPYECQVCGGKFAQQRNLISHMKMHAAGPDGKAKLDFPDSVYAMARLTADQLGLKQEKAAELLSHTSHFLSDPKAMESLYPLAKFTAEHLGLSQDKAAEVLAQAPHLHADAARTIERYSPP.

The interval 1 to 27 (APGARPAASRERGHKSREERCGERGAA) is disordered. Basic and acidic residues predominate over residues 8-23 (ASRERGHKSREERCGE). The BTB domain occupies 63-126 (CDVIIVVQNA…IYTGRLGECE (64 aa)). Residues 241 to 245 (GLDLS) form a binding to CtBP region. 2 disordered regions span residues 264 to 326 (PAEP…LPRG) and 342 to 405 (GPYL…DRYC). Basic and acidic residues-rich tracts occupy residues 266–278 (EPRE…RHDS) and 351–361 (EKELEREEKAE). Residues 384–398 (STSEETGSSEGPSPG) are compositionally biased toward low complexity. 5 consecutive C2H2-type zinc fingers follow at residues 420–447 (YVCI…EEEL), 474–501 (YRCS…LTRP), 502–529 (YPCT…GLKP), 530–557 (FACD…GEKP), and 558–585 (YECQ…AGPD).

It belongs to the krueppel C2H2-type zinc-finger protein family. Hic subfamily. In terms of assembly, interacts with CtBP. As to expression, isoform 1 is highly expressed in kidney and lung. Expression of isoform 2 is higher in the lens, retina and stomach, and extremely low in heart, muscle, kidney and lung. Isoform 3 is weakly expressed in heart, kidney and lens.

It localises to the nucleus. In terms of biological role, binds specifically to the gamma F-1-binding motif of the gamma F-crystallin promoter. May have a regulatory role in sclerotome specification and/or differentiation. Isoform 2 functions as a transcriptional repressor in lens cells. This Gallus gallus (Chicken) protein is Hypermethylated in cancer 1 protein (HIC1).